The following is a 362-amino-acid chain: Trans-enoyl reductase phm4 (362 aa).

NADP(+) is bound at residue 50-53; the sequence is VDAK. A substrate-binding site is contributed by 136–143; it reads TCFMTCGL. NADP(+) is bound by residues 171–174, 194–197, Tyr212, and 259–260; these read ATAT, SPHS, and LD. A substrate-binding site is contributed by 280–284; the sequence is GPIML. Residue 349 to 350 participates in NADP(+) binding; the sequence is VN.

Belongs to the zinc-containing alcohol dehydrogenase family. As to quaternary structure, monomer.

It functions in the pathway secondary metabolite biosynthesis. Trans-enoyl reductase; part of the gene cluster that mediates the biosynthesis of the trans-fused decalin-containing tetramic acid phomasetin, the stereochemical opposite of the HIV-1 integrase inhibitor equisetin. The PKS module of phm1 together with the enoylreductase phm4 catalyze the formation of the polyketide unit which is then conjugated to L-serine by the condensation domain of the phm1 NRPS module. Activity of the Dieckmann cyclase domain (RED) of phm1 results in release of the Dieckmann product intermediate. The Diels-Alderase phm7 then uses the Dieckmann product of phm1 as substrate and catalyzes the Diels-Alder cycloaddition to form the decalin ring of N-desmethylphomasetin. N-desmethylphomasetin is further methylated to phomasetin by the methyltransferase phm5. This Pyrenochaetopsis sp protein is Trans-enoyl reductase phm4.